Consider the following 143-residue polypeptide: Ribonuclease P protein component 2 (143 aa).

The protein belongs to the eukaryotic/archaeal RNase P protein component 2 family. Consists of a catalytic RNA component and at least 4-5 protein subunits.

The protein resides in the cytoplasm. The enzyme catalyses Endonucleolytic cleavage of RNA, removing 5'-extranucleotides from tRNA precursor.. Its function is as follows. Part of ribonuclease P, a protein complex that generates mature tRNA molecules by cleaving their 5'-ends. This is Ribonuclease P protein component 2 from Saccharolobus islandicus (strain L.S.2.15 / Lassen #1) (Sulfolobus islandicus).